A 243-amino-acid chain; its full sequence is MILHLIYGPTCSGKTDMAIQIAQETGWPVVALDRVQCCPQIATGSGRPLESELQSTRRIYLDSRPLTEGILDAESAHRRLIFEVDWRKSEDGLILEGGSISLLNCMAKSPFWRSGFQWHVKRLRLGDSDAFLTRAKQRVAEMFAIREDRPSLLEELAELWNYPAARPILEDIDGYRCAIRFARKHDLAISQLPNIDAGRHVELIEAIANEYLEHALSQERDFPQWPEDGAGQPVCPVTLTRIR.

The catalysed reaction is dimethylallyl diphosphate + AMP = N(6)-(dimethylallyl)adenosine 5'-phosphate + diphosphate. Its function is as follows. Transfers dimethylallyl groups to AMP as part of the biosynthesis of cytokinin phytohormones. The protein is Adenylate dimethylallyltransferase (tzs) of Agrobacterium tumefaciens (strain T37).